Here is a 320-residue protein sequence, read N- to C-terminus: NAC domain-containing protein 20 (320 aa).

Positions 14-170 constitute an NAC domain; that stretch reads LPPGFRFHPT…DWAVCRIFHK (157 aa). The DNA-binding element occupies 114 to 176; sequence IGMKKTLVFY…IFHKSSGIKK (63 aa).

As to quaternary structure, forms homodimers. Forms heterodimers with NAC26. As to expression, expressed in developing seeds. Expressed in developing endosperm.

The protein resides in the nucleus. It is found in the endoplasmic reticulum. Its function is as follows. Transcription factor that acts redundantly with NAC26 to regulate the expression of genes involved in the biosynthesis of starch and storage proteins in grain. Directly binds to the promoters of starch synthase 1 (SS1), pullulanase (PUL), glutelin A1 (GLUA1), glutelins B4 and B5 (GLUB4 and GLUB5), alpha-globulin and 16 kDa prolamin, and activates their expression. In Oryza sativa subsp. japonica (Rice), this protein is NAC domain-containing protein 20.